The chain runs to 184 residues: MKIGVLALQGAVREHIRHIELSGHEGIAVKKVEQLDEIDGLILPGGESTTLRRLMDLYGFKEKLQQSDLPIFGTCAGLIVLAKDVEGETGYLKKLDITVERNSFGRQVDSFEAELDIKGIAEDIEGVFIRAPHIANVEEGVEILSTVGDKIVAVKQGKYLGVSFHPELTDDYRVTQYFIDHMVK.

46 to 48 (GES) is a binding site for L-glutamine. Residue Cys-75 is the Nucleophile of the active site. Residues Arg-101 and 129–130 (IR) contribute to the L-glutamine site. Residues His-165 and Glu-167 each act as charge relay system in the active site.

This sequence belongs to the glutaminase PdxT/SNO family. In terms of assembly, in the presence of PdxS, forms a dodecamer of heterodimers. Only shows activity in the heterodimer.

It catalyses the reaction aldehydo-D-ribose 5-phosphate + D-glyceraldehyde 3-phosphate + L-glutamine = pyridoxal 5'-phosphate + L-glutamate + phosphate + 3 H2O + H(+). The enzyme catalyses L-glutamine + H2O = L-glutamate + NH4(+). The protein operates within cofactor biosynthesis; pyridoxal 5'-phosphate biosynthesis. Functionally, catalyzes the hydrolysis of glutamine to glutamate and ammonia as part of the biosynthesis of pyridoxal 5'-phosphate. The resulting ammonia molecule is channeled to the active site of PdxS. The protein is Pyridoxal 5'-phosphate synthase subunit PdxT of Staphylococcus haemolyticus (strain JCSC1435).